A 946-amino-acid chain; its full sequence is DNA primase (946 aa).

The interval 596–626 (RDTEEDEDGKEDKNNVPGNGVFQKTTSSVDT) is disordered. A compositionally biased stretch (polar residues) spans 617–626 (FQKTTSSVDT). The CHC2-type zinc-finger motif lies at 881-920 (CLNYTHRNPQETVQVFIDLRTEHSYALWASLWSRCFTKKC).

This sequence belongs to the herpesviridae DNA primase family. In terms of assembly, associates with the helicase and the primase-associated factor to form the helicase-primase factor.

The protein localises to the host nucleus. In terms of biological role, essential component of the helicase/primase complex. Unwinds the DNA at the replication forks and generates single-stranded DNA for both leading and lagging strand synthesis. The primase initiates primer synthesis and thereby produces large amount of short RNA primers on the lagging strand that the polymerase elongates using dNTPs. The chain is DNA primase (UL70) from Human cytomegalovirus (strain Merlin) (HHV-5).